Reading from the N-terminus, the 265-residue chain is Seminal vesicle secretory protein 3A (265 aa).

Residues 1–20 form the signal peptide; sequence MKSIFFSLSLLLLLEKKAAG. A run of 5 repeats spans residues 116–119, 122–125, 129–132, 136–139, and 142–145. Residues 116-145 are 5 X 4 AA tandem repeats of Q-X-K-[ST]; that stretch reads QIKSQTQVKSYAAQLKSQPGQLKTIGQVKS.

Glycosylated. Post-translationally, covalently cross-linked by transglutaminase, which is important for the formation of the gelatinous copulatory plug. Five repeats of Q-X-K-(S/T) in the central region of the protein serve as the transglutaminase substrate site(s). In terms of tissue distribution, highly expressed in the seminal vesicle where it is detected in luminal epithelium of the mucosa folds, and also in luminal fluid (at protein level). Not detected in other tissues tested.

It localises to the secreted. Its function is as follows. Component of the copulatory plug. The chain is Seminal vesicle secretory protein 3A from Mus musculus (Mouse).